The sequence spans 238 residues: Urease subunit alpha (238 aa).

The urease gamma stretch occupies residues 1–102; it reads MKLTPKELDK…LVTVHTPIEA (102 aa). The segment at 103-238 is urease beta; it reads NGKLVPGELF…DDNYVKTIKE (136 aa).

In the N-terminal section; belongs to the urease gamma subunit family. This sequence in the C-terminal section; belongs to the urease beta subunit family. As to quaternary structure, heterohexamer of 3 UreA (alpha) and 3 UreB (beta) subunits.

Its subcellular location is the cytoplasm. The enzyme catalyses urea + 2 H2O + H(+) = hydrogencarbonate + 2 NH4(+). It functions in the pathway nitrogen metabolism; urea degradation; CO(2) and NH(3) from urea (urease route): step 1/1. In Helicobacter pylori (strain P12), this protein is Urease subunit alpha.